Consider the following 248-residue polypeptide: NH(3)-dependent NAD(+) synthetase (248 aa).

ATP is bound at residue 30-37 (GLSGGIDS). D36 serves as a coordination point for Mg(2+). R114 provides a ligand contact to deamido-NAD(+). T134 serves as a coordination point for ATP. E139 contacts Mg(2+). Deamido-NAD(+) contacts are provided by K147 and D154. Residues K163 and T185 each coordinate ATP. Deamido-NAD(+) is bound at residue 232-233 (HK).

This sequence belongs to the NAD synthetase family. Homodimer.

The enzyme catalyses deamido-NAD(+) + NH4(+) + ATP = AMP + diphosphate + NAD(+) + H(+). The protein operates within cofactor biosynthesis; NAD(+) biosynthesis; NAD(+) from deamido-NAD(+) (ammonia route): step 1/1. In terms of biological role, catalyzes the ATP-dependent amidation of deamido-NAD to form NAD. Uses ammonia as a nitrogen source. The polypeptide is NH(3)-dependent NAD(+) synthetase (Mycoplasma genitalium (strain ATCC 33530 / DSM 19775 / NCTC 10195 / G37) (Mycoplasmoides genitalium)).